The following is a 420-amino-acid chain: Exodeoxyribonuclease 7 large subunit (420 aa).

The protein belongs to the XseA family. In terms of assembly, heterooligomer composed of large and small subunits.

The protein resides in the cytoplasm. The enzyme catalyses Exonucleolytic cleavage in either 5'- to 3'- or 3'- to 5'-direction to yield nucleoside 5'-phosphates.. Its function is as follows. Bidirectionally degrades single-stranded DNA into large acid-insoluble oligonucleotides, which are then degraded further into small acid-soluble oligonucleotides. This is Exodeoxyribonuclease 7 large subunit from Helicobacter pylori (strain G27).